The following is an 804-amino-acid chain: RasGAP-activating-like protein 1 (804 aa).

2 consecutive C2 domains span residues 1–105 (MAKS…DSWI) and 116–231 (VQGE…KGWF). Ca(2+)-binding residues include Asp-21, Asp-27, Asp-74, Asp-76, Asp-82, Asp-149, Asp-155, Asp-202, Asp-204, and Asp-210. A Ras-GAP domain is found at 317 to 545 (GLAGRFLDYL…SRVRDFLDRL (229 aa)). The PH domain occupies 565-672 (AIVREGYLLK…WLSALRKASA (108 aa)). The segment at 674 to 710 (NPNKLAACHPGAFRSARWTCCLQAERSAAGCSRTHSA) adopts a Btk-type zinc-finger fold. The Zn(2+) site is built by His-682, Cys-693, Cys-694, and Cys-704.

Requires Ca(2+) as cofactor. As to expression, highly expressed in thyroid and adrenal medulla, lower expression in brain, spinal cord and trachea. Expressed in melanocytes.

Probable inhibitory regulator of the Ras-cyclic AMP pathway. Plays a role in dendrite formation by melanocytes. This chain is RasGAP-activating-like protein 1, found in Homo sapiens (Human).